The primary structure comprises 416 residues: UDP-N-acetylglucosamine 1-carboxyvinyltransferase (416 aa).

Residue 22 to 23 (KN) participates in phosphoenolpyruvate binding. Residue Arg91 participates in UDP-N-acetyl-alpha-D-glucosamine binding. Cys115 functions as the Proton donor in the catalytic mechanism. A 2-(S-cysteinyl)pyruvic acid O-phosphothioketal modification is found at Cys115. UDP-N-acetyl-alpha-D-glucosamine-binding positions include 120–124 (RPIDL), Asp305, and Ile327.

Belongs to the EPSP synthase family. MurA subfamily.

The protein localises to the cytoplasm. It carries out the reaction phosphoenolpyruvate + UDP-N-acetyl-alpha-D-glucosamine = UDP-N-acetyl-3-O-(1-carboxyvinyl)-alpha-D-glucosamine + phosphate. It participates in cell wall biogenesis; peptidoglycan biosynthesis. Cell wall formation. Adds enolpyruvyl to UDP-N-acetylglucosamine. This is UDP-N-acetylglucosamine 1-carboxyvinyltransferase from Buchnera aphidicola subsp. Acyrthosiphon pisum (strain 5A).